A 679-amino-acid chain; its full sequence is DNA-directed RNA polymerase subunit beta' (679 aa).

The Zn(2+) site is built by C69, C71, C87, and C90. Residues D489, D491, and D493 each contribute to the Mg(2+) site.

It belongs to the RNA polymerase beta' chain family. RpoC1 subfamily. In plastids the minimal PEP RNA polymerase catalytic core is composed of four subunits: alpha, beta, beta', and beta''. When a (nuclear-encoded) sigma factor is associated with the core the holoenzyme is formed, which can initiate transcription. Mg(2+) is required as a cofactor. It depends on Zn(2+) as a cofactor.

It localises to the plastid. The protein localises to the chloroplast. It catalyses the reaction RNA(n) + a ribonucleoside 5'-triphosphate = RNA(n+1) + diphosphate. Its function is as follows. DNA-dependent RNA polymerase catalyzes the transcription of DNA into RNA using the four ribonucleoside triphosphates as substrates. The chain is DNA-directed RNA polymerase subunit beta' from Phalaenopsis aphrodite subsp. formosana (Moth orchid).